Here is a 399-residue protein sequence, read N- to C-terminus: Elongation factor Tu (399 aa).

The tr-type G domain maps to 10–204; it reads KPHVNIGTIG…AVDASIPEPE (195 aa). The tract at residues 19–26 is G1; the sequence is GHVDHGKT. Residue 19–26 coordinates GTP; that stretch reads GHVDHGKT. Residue Thr-26 participates in Mg(2+) binding. The G2 stretch occupies residues 60–64; it reads GITIN. The G3 stretch occupies residues 81–84; sequence DCPG. Residues 81–85 and 136–139 each bind GTP; these read DCPGH and NKCD. A G4 region spans residues 136-139; sequence NKCD. Residues 174-176 are G5; it reads SGL.

Belongs to the TRAFAC class translation factor GTPase superfamily. Classic translation factor GTPase family. EF-Tu/EF-1A subfamily. Monomer.

The protein localises to the cytoplasm. It catalyses the reaction GTP + H2O = GDP + phosphate + H(+). Its function is as follows. GTP hydrolase that promotes the GTP-dependent binding of aminoacyl-tRNA to the A-site of ribosomes during protein biosynthesis. The protein is Elongation factor Tu of Prochlorococcus marinus (strain MIT 9313).